A 711-amino-acid chain; its full sequence is Polyribonucleotide nucleotidyltransferase (711 aa).

The FFRR loop; important for RNA binding stretch occupies residues 77 to 80; sequence FFRR. The tract at residues 327-331 is interaction with RNase E; sequence LDVRT. Residues D486 and D492 each coordinate Mg(2+). In terms of domain architecture, KH spans 553–612; that stretch reads PRIHTIKINPDKIKDVIGKGGSVIRALTEETGTTIEIEDDGTVKIAATDGEKAKHAIRRI. An S1 motif domain is found at 622–690; it reads GRVYTGKVTR…RQGRIRLSIK (69 aa). A disordered region spans residues 689–711; it reads IKEATEQSQPAAAPEAPAAEQGE. Residues 694–711 show a composition bias toward low complexity; it reads EQSQPAAAPEAPAAEQGE.

Belongs to the polyribonucleotide nucleotidyltransferase family. As to quaternary structure, component of the RNA degradosome, which is a multiprotein complex involved in RNA processing and mRNA degradation. Interacts with RNase E (rne). Homotrimer. The homotrimer forms a ring-like structure with a central channel, where RNA molecules can bind. RNA molecules bind between neighboring subunits. Might interact with YicC. Mg(2+) serves as cofactor. Requires Mn(2+) as cofactor.

The protein resides in the cytoplasm. The enzyme catalyses RNA(n+1) + phosphate = RNA(n) + a ribonucleoside 5'-diphosphate. Its function is as follows. Involved in mRNA degradation. Catalyzes the phosphorolysis of single-stranded polyribonucleotides processively in the 3'- to 5'-direction. Also involved, along with RNase II, in tRNA processing. RNases II and R contribute to rRNA degradation during starvation, while RNase R and PNPase are the major contributors to quality control of rRNA during steady state growth. Contributes to degradation of some small RNAs (sRNA). In Escherichia coli (strain K12), this protein is Polyribonucleotide nucleotidyltransferase.